Here is a 351-residue protein sequence, read N- to C-terminus: Auxin efflux carrier component 5 (351 aa).

10 helical membrane-spanning segments follow: residues 7 to 27, 39 to 59, 71 to 91, 100 to 120, 132 to 152, 210 to 230, 234 to 254, 271 to 291, 295 to 315, and 329 to 349; these read VYKV…GYGS, CDAI…IEFT, FIAA…LWAK, WSIT…GVPL, LVVQ…LFVL, ILGI…PGIL, ILIM…IFMA, MVLK…VLGL, VLRV…FIFA, and VIFG…ALEF.

This sequence belongs to the auxin efflux carrier (TC 2.A.69.1) family. As to expression, expressed in elongating parts of hypocotyl, cotyledon vasculature and guard cells. Detected in root pericycle and root tip and at later developmental stages in leaves, stems and flowers. Expressed in veins of mature leaves.

It localises to the endoplasmic reticulum membrane. Its subcellular location is the cell membrane. Its function is as follows. Auxin transporter regulating intracellular auxin homeostasis and metabolism. Mediates the auxin transport from the cytosol into the lumen of the endoplasmic reticulum. May also act as an auxin efflux carrier when located to the cell membrane. PIN5 and PIN8 may have an antagonistic/compensatory activity. Involved in unfolded protein response (UPR) activation. Involved in the control of vein patterning. Promotes vein formation. PIN5, PIN6, and PIN8 control vein network geometry, but they are expressed in mutually exclusive domains of leaf vascular cells. This Arabidopsis thaliana (Mouse-ear cress) protein is Auxin efflux carrier component 5.